The primary structure comprises 218 residues: Ribonuclease S-7 (218 aa).

Residues 1–22 form the signal peptide; that stretch reads MLNSPLTSVLFVLLFVLSPIYG. Gln32 lines the RNA pocket. Cys38 and Cys43 are joined by a disulfide. N-linked (GlcNAc...) asparagine glycosylation is present at Asn49. RNA is bound at residue His53. His53 acts as the Proton donor in catalysis. Asn59 is a glycosylation site (N-linked (GlcNAc...) asparagine). Cys67 and Cys116 form a disulfide bridge. RNA contacts are provided by residues 91–92, Phe105, 108–109, and 112–113; these read DL, HE, and KH. Residue Glu109 is part of the active site. The Proton acceptor role is filled by His113. N-linked (GlcNAc...) asparagine glycosylation is present at Asn162. Disulfide bonds link Cys177/Cys207 and Cys190/Cys201.

Belongs to the RNase T2 family.

The protein localises to the secreted. It is found in the extracellular space. It carries out the reaction a ribonucleotidyl-ribonucleotide-RNA + H2O = a 3'-end 3'-phospho-ribonucleotide-RNA + a 5'-end dephospho-ribonucleoside-RNA + H(+). Its function is as follows. Self-incompatibility (SI) is the inherited ability of a flowering plant to prevent self-fertilization by discriminating between self and non-self pollen during pollination. In many species of the Solanaceae, self-incompatibility is controlled by the single, multiallelic locus S. This stylar glycoprotein is associated with expression of self-incompatibility in potato. This is Ribonuclease S-7 from Nicotiana alata (Winged tobacco).